The primary structure comprises 349 residues: MIEFDNLTYLHGKPQGTGLLKANPEDFVVVEDLGFEPDGEGEHILVRILKNGCNTRFVADALAKFLKIHSREVSFAGQKDKHAVTEQWLCARVPGKEMPDLSAFQLEGCQVLEYARHKRKLRLGALKGNAFTLVLREVSNRDDVEQRLIDICVKGVPNYFGAQRFGIGGSNLQGALRWAQTNTPVRDRNKRSFWLSAARSALFNQIVAERLKKADVNQVVDGDALQLAGRGSWFVATTEELAELQRRVNDKELMITAALPGSGEWGTQREALAFEQAAVAAETELQALLVREKVEAARRAMLLYPQQLSWNWWDDVTVEIRFWLPAGSFATSVVRELINTTGDYAHIAE.

F27 is a substrate binding site. The active-site Nucleophile is the D80. N129 lines the substrate pocket. The region spanning 155 to 303 (GVPNYFGAQR…VEAARRAMLL (149 aa)) is the TRUD domain. F329 is a binding site for substrate.

This sequence belongs to the pseudouridine synthase TruD family.

The catalysed reaction is uridine(13) in tRNA = pseudouridine(13) in tRNA. Responsible for synthesis of pseudouridine from uracil-13 in transfer RNAs. This chain is tRNA pseudouridine synthase D, found in Shigella flexneri.